A 160-amino-acid chain; its full sequence is Probable transcriptional regulator YgiV (160 aa).

Represses expression of mcbR. The sequence is that of Probable transcriptional regulator YgiV (ygiV) from Escherichia coli (strain K12).